Consider the following 920-residue polypeptide: Isoleucine--tRNA ligase (920 aa).

The 'HIGH' region signature appears at 58–68 (PYANGHLHLGH). Glu569 lines the L-isoleucyl-5'-AMP pocket. A 'KMSKS' region motif is present at residues 610–614 (KMSKS). Lys613 contacts ATP. Residues Cys895, Cys898, Cys910, and Cys913 each contribute to the Zn(2+) site.

This sequence belongs to the class-I aminoacyl-tRNA synthetase family. IleS type 1 subfamily. In terms of assembly, monomer. It depends on Zn(2+) as a cofactor.

Its subcellular location is the cytoplasm. It carries out the reaction tRNA(Ile) + L-isoleucine + ATP = L-isoleucyl-tRNA(Ile) + AMP + diphosphate. Its function is as follows. Catalyzes the attachment of isoleucine to tRNA(Ile). As IleRS can inadvertently accommodate and process structurally similar amino acids such as valine, to avoid such errors it has two additional distinct tRNA(Ile)-dependent editing activities. One activity is designated as 'pretransfer' editing and involves the hydrolysis of activated Val-AMP. The other activity is designated 'posttransfer' editing and involves deacylation of mischarged Val-tRNA(Ile). The sequence is that of Isoleucine--tRNA ligase from Helicobacter pylori (strain Shi470).